The following is a 430-amino-acid chain: Septin-14 (430 aa).

A Septin-type G domain is found at 48-313; sequence KGFSFNILCV…ECYRSNRLQK (266 aa). The interval 58-65 is G1 motif; that stretch reads GETGIGKT. GTP contacts are provided by residues 58 to 65, glycine 113, 194 to 202, glycine 246, and arginine 261; these read GETGIGKT and KADSLSKND. The G3 motif stretch occupies residues 110–113; that stretch reads KTVG. Positions 193 to 196 are G4 motif; that stretch reads AKAD. Positions 329–410 form a coiled coil; sequence QEMYEAKRRE…IIDFYKMKAA (82 aa). The segment at 367-430 is required for interaction with SEPTIN4. Required for migration of cortical neurons during corticogenesis; it reads DAEKELQDKF…NIKKDKDRKK (64 aa).

The protein belongs to the TRAFAC class TrmE-Era-EngA-EngB-Septin-like GTPase superfamily. Septin GTPase family. In terms of assembly, septins polymerize into heterooligomeric protein complexes that form filaments, and can associate with cellular membranes, actin filaments and microtubules. GTPase activity is required for filament formation. Interacts with ACTN4. Interacts with SEPTIN9. Interacts (via C-terminus) with SEPTIN4. As to expression, expressed in the testis and brain including the cerebrum, hippocampus and cerebellum (at protein level).

The protein resides in the cytoplasm. It localises to the cytoskeleton. It is found in the cell projection. Its subcellular location is the axon. The protein localises to the dendrite. The protein resides in the perikaryon. It localises to the perinuclear region. It is found in the cytoplasmic vesicle. Its subcellular location is the secretory vesicle. The protein localises to the acrosome. Filament-forming cytoskeletal GTPase. Involved in the migration of cortical neurons and the formation of neuron leading processes during embryonic development. Plays a role in sperm head formation during spermiogenesis, potentially via facilitating localization of ACTN4 to cell filaments. The polypeptide is Septin-14 (Mus musculus (Mouse)).